A 417-amino-acid polypeptide reads, in one-letter code: MAP kinase-interacting serine/threonine-protein kinase 1 (417 aa).

Residues 1 to 20 (MVSSQPVPIDDGGKRRKKKR) form a disordered region. The Protein kinase domain maps to 37–321 (RLTDELLGEG…AAQVLQHPWL (285 aa)). Residues 43–51 (LGEGAYAKV) and lysine 66 each bind ATP. Residue aspartate 158 is the Proton acceptor of the active site. A disordered region spans residues 397–417 (AHARKGGSHLTHTTVTSQGAT). The span at 406-417 (LTHTTVTSQGAT) shows a compositional bias: polar residues.

It belongs to the protein kinase superfamily. CAMK Ser/Thr protein kinase family. Mg(2+) serves as cofactor.

The catalysed reaction is L-seryl-[protein] + ATP = O-phospho-L-seryl-[protein] + ADP + H(+). The enzyme catalyses L-threonyl-[protein] + ATP = O-phospho-L-threonyl-[protein] + ADP + H(+). May play a role in the response to environmental stress and cytokines. Appears to regulate translation by phosphorylating EIF4E, thus increasing the affinity of this protein for the 7-methylguanosine-containing mRNA cap. This chain is MAP kinase-interacting serine/threonine-protein kinase 1 (mknk1), found in Xenopus tropicalis (Western clawed frog).